A 194-amino-acid polypeptide reads, in one-letter code: dTTP/UTP pyrophosphatase (194 aa).

Residue Asp-73 is the Proton acceptor of the active site.

Belongs to the Maf family. YhdE subfamily. A divalent metal cation serves as cofactor.

It localises to the cytoplasm. It catalyses the reaction dTTP + H2O = dTMP + diphosphate + H(+). It carries out the reaction UTP + H2O = UMP + diphosphate + H(+). Its function is as follows. Nucleoside triphosphate pyrophosphatase that hydrolyzes dTTP and UTP. May have a dual role in cell division arrest and in preventing the incorporation of modified nucleotides into cellular nucleic acids. This is dTTP/UTP pyrophosphatase from Geotalea uraniireducens (strain Rf4) (Geobacter uraniireducens).